The following is a 445-amino-acid chain: Dolichyl-diphosphooligosaccharide--protein glycosyltransferase 48 kDa subunit (445 aa).

Residues 1 to 20 form the signal peptide; the sequence is MRWLPGLLLIASIGFHQSLA. The Lumenal segment spans residues 21–405; the sequence is DRVLVLGETA…YERFIRSAYP (385 aa). The chain crosses the membrane as a helical span at residues 406-426; it reads YYASSFSMMAGLVLFSIVYLY. The Cytoplasmic segment spans residues 427-445; sequence HKDTPVKGAKVLDSEKKKN.

The protein belongs to the DDOST 48 kDa subunit family. As to quaternary structure, component of the oligosaccharyltransferase (OST) complex.

Its subcellular location is the endoplasmic reticulum membrane. Its pathway is protein modification; protein glycosylation. In terms of biological role, subunit of the oligosaccharyl transferase (OST) complex that catalyzes the initial transfer of a defined glycan (Glc(3)Man(9)GlcNAc(2) in eukaryotes) from the lipid carrier dolichol-pyrophosphate to an asparagine residue within an Asn-X-Ser/Thr consensus motif in nascent polypeptide chains, the first step in protein N-glycosylation. N-glycosylation occurs cotranslationally and the complex associates with the Sec61 complex at the channel-forming translocon complex that mediates protein translocation across the endoplasmic reticulum (ER). All subunits are required for a maximal enzyme activity. Required for the assembly of both SST3A- and SS3B-containing OST complexes. Required for normal lifespan. The protein is Dolichyl-diphosphooligosaccharide--protein glycosyltransferase 48 kDa subunit of Caenorhabditis elegans.